The primary structure comprises 128 residues: uncharacterized protein (128 aa).

This is an uncharacterized protein from Mycobacterium tuberculosis (strain CDC 1551 / Oshkosh).